The following is a 217-amino-acid chain: Cytidylate kinase (217 aa).

Residue 10–18 (GPAGAGKST) coordinates ATP.

This sequence belongs to the cytidylate kinase family. Type 1 subfamily.

The protein resides in the cytoplasm. The enzyme catalyses CMP + ATP = CDP + ADP. It catalyses the reaction dCMP + ATP = dCDP + ADP. The chain is Cytidylate kinase from Clostridium botulinum (strain ATCC 19397 / Type A).